The sequence spans 547 residues: Chaperonin GroEL (547 aa).

ATP is bound by residues 30-33 (TLGP), K51, 87-91 (DGTTT), G415, and D495.

This sequence belongs to the chaperonin (HSP60) family. As to quaternary structure, forms a cylinder of 14 subunits composed of two heptameric rings stacked back-to-back. Interacts with the co-chaperonin GroES.

Its subcellular location is the cytoplasm. The catalysed reaction is ATP + H2O + a folded polypeptide = ADP + phosphate + an unfolded polypeptide.. In terms of biological role, together with its co-chaperonin GroES, plays an essential role in assisting protein folding. The GroEL-GroES system forms a nano-cage that allows encapsulation of the non-native substrate proteins and provides a physical environment optimized to promote and accelerate protein folding. This chain is Chaperonin GroEL, found in Shewanella pealeana (strain ATCC 700345 / ANG-SQ1).